Here is a 237-residue protein sequence, read N- to C-terminus: MAKSQAGQTVEPEASKLWIHCNSCCALFCDKKHTFFLLACHHVFCERCVKVSAGRTPSDAPIFECSTCRRSVRGRQLTNSMPNHFKQLFHPEPFTIGNDFVETFQRGNHRHFDKYKERKELEMDKLFKDIEVAKSVCQKRFLEAQMLRVERKKLMQRSRYIKAEVANRKAEMHRMAQAYRSRSLTSQSSSSAQRSARGRPRGRGTATQSSSRRRSTESAKRQQITSFIHPPNNSFDL.

The segment at 21–69 (CNSCCALFCDKKHTFFLLACHHVFCERCVKVSAGRTPSDAPIFECSTCR) adopts an RING-type zinc-finger fold. Residues 172-237 (MHRMAQAYRS…IHPPNNSFDL (66 aa)) form a disordered region. Residues 180-195 (RSRSLTSQSSSSAQRS) are compositionally biased toward low complexity. Over residues 221-237 (RQQITSFIHPPNNSFDL) the composition is skewed to polar residues.

As to quaternary structure, may interact with itself and with narya and nenya through their RING-type zinc fingers. As to expression, expressed in nurse cell and pro-oocytes (at protein level).

Its subcellular location is the chromosome. Required for the formation of DNA double-strand breaks during meiosis together with narya and nenya. The chain is RING finger protein vilya from Drosophila melanogaster (Fruit fly).